Consider the following 34-residue polypeptide: Photosystem II reaction center protein M (34 aa).

A helical membrane pass occupies residues 7 to 27 (GFVASLLFVLVPTVFLIILFI).

Belongs to the PsbM family. In terms of assembly, PSII is composed of 1 copy each of membrane proteins PsbA, PsbB, PsbC, PsbD, PsbE, PsbF, PsbH, PsbI, PsbJ, PsbK, PsbL, PsbM, PsbT, PsbX, PsbY, PsbZ, Psb30/Ycf12, peripheral proteins PsbO, CyanoQ (PsbQ), PsbU, PsbV and a large number of cofactors. It forms dimeric complexes.

Its subcellular location is the cellular thylakoid membrane. In terms of biological role, one of the components of the core complex of photosystem II (PSII). PSII is a light-driven water:plastoquinone oxidoreductase that uses light energy to abstract electrons from H(2)O, generating O(2) and a proton gradient subsequently used for ATP formation. It consists of a core antenna complex that captures photons, and an electron transfer chain that converts photonic excitation into a charge separation. This subunit is found at the monomer-monomer interface. The protein is Photosystem II reaction center protein M of Synechococcus sp. (strain WH7803).